We begin with the raw amino-acid sequence, 762 residues long: 5-methyltetrahydropteroyltriglutamate--homocysteine methyltransferase (762 aa).

5-methyltetrahydropteroyltri-L-glutamate-binding positions include 17 to 20 and Lys-111; that span reads REWK. L-homocysteine is bound by residues 435 to 437 and Glu-488; that span reads IGS. Residues 435-437 and Glu-488 contribute to the L-methionine site; that span reads IGS. 5-methyltetrahydropteroyltri-L-glutamate contacts are provided by residues 519–520 and Trp-565; that span reads RC. An L-homocysteine-binding site is contributed by Asp-603. Residue Asp-603 coordinates L-methionine. Residue Glu-609 coordinates 5-methyltetrahydropteroyltri-L-glutamate. 3 residues coordinate Zn(2+): His-645, Cys-647, and Glu-669. His-698 serves as the catalytic Proton donor. Cys-730 contacts Zn(2+).

This sequence belongs to the vitamin-B12 independent methionine synthase family. Zn(2+) serves as cofactor.

It carries out the reaction 5-methyltetrahydropteroyltri-L-glutamate + L-homocysteine = tetrahydropteroyltri-L-glutamate + L-methionine. It functions in the pathway amino-acid biosynthesis; L-methionine biosynthesis via de novo pathway; L-methionine from L-homocysteine (MetE route): step 1/1. Catalyzes the transfer of a methyl group from 5-methyltetrahydrofolate to homocysteine resulting in methionine formation. In Bacillus cereus (strain AH187), this protein is 5-methyltetrahydropteroyltriglutamate--homocysteine methyltransferase.